A 1026-amino-acid polypeptide reads, in one-letter code: Contactin-4 (1026 aa).

An N-terminal signal peptide occupies residues Met1–Ala18. 6 Ig-like C2-type domains span residues Pro32–Gln117, Glu122–Leu206, Pro225–Thr311, Pro316–Ser400, Pro406–Val493, and Pro497–Ser586. Cystine bridges form between Cys50-Cys100, Cys144-Cys194, Cys247-Cys295, Cys337-Cys384, Cys429-Cys477, and Cys519-Cys576. Residues Asn65, Asn90, and Asn191 are each glycosylated (N-linked (GlcNAc...) asparagine). 3 N-linked (GlcNAc...) asparagine glycosylation sites follow: Asn370, Asn375, and Asn466. Fibronectin type-III domains are found at residues Pro599–Ala697, Thr702–Glu799, Pro804–Pro899, and Pro900–Ser995. The interval Pro685 to Gly710 is disordered. Over residues Arg687–Glu696 the composition is skewed to basic and acidic residues. N-linked (GlcNAc...) asparagine glycosylation is found at Asn705, Asn764, Asn858, Asn893, Asn911, Asn929, and Asn954. The GPI-anchor amidated serine moiety is linked to residue Ser1000. A propeptide spans Gly1001 to Leu1026 (removed in mature form).

The protein belongs to the immunoglobulin superfamily. Contactin family. In terms of assembly, interacts with PTPRG. Specifically expressed in the nervous system. Not expressed in heart, spleen, lung, liver, kidney or skeletal muscle. In the hippocampus, it is highly expressed in CA1 pyramidal cells and weakly expressed in other regions of the hippocampus.

It is found in the cell membrane. The protein resides in the secreted. Functionally, contactins mediate cell surface interactions during nervous system development. Has some neurite outgrowth-promoting activity. May be involved in synaptogenesis. This is Contactin-4 (Cntn4) from Rattus norvegicus (Rat).